The following is a 97-amino-acid chain: Ribosomal biogenesis factor (97 aa).

Phosphoserine is present on serine 19. Lysine 21 is modified (N6-acetyllysine). The residue at position 69 (serine 69) is a Phosphoserine.

In terms of assembly, associates with the pre-60S ribosomal particles.

Its subcellular location is the nucleus. It is found in the nucleolus. In terms of biological role, trans-acting factor in ribosome biogenesis required for efficient 40S and 60S subunit production. The protein is Ribosomal biogenesis factor (Rbis) of Mus musculus (Mouse).